A 167-amino-acid chain; its full sequence is Endoribonuclease YbeY (167 aa).

Zn(2+) contacts are provided by H131, H135, and H141.

Belongs to the endoribonuclease YbeY family. Zn(2+) is required as a cofactor.

It localises to the cytoplasm. In terms of biological role, single strand-specific metallo-endoribonuclease involved in late-stage 70S ribosome quality control and in maturation of the 3' terminus of the 16S rRNA. The sequence is that of Endoribonuclease YbeY from Rickettsia rickettsii (strain Iowa).